Consider the following 130-residue polypeptide: Small ribosomal subunit protein uS8 (130 aa).

It belongs to the universal ribosomal protein uS8 family. In terms of assembly, part of the 30S ribosomal subunit.

Functionally, one of the primary rRNA binding proteins, it binds directly to 16S rRNA central domain where it helps coordinate assembly of the platform of the 30S subunit. The protein is Small ribosomal subunit protein uS8 of Pyrobaculum arsenaticum (strain DSM 13514 / JCM 11321 / PZ6).